We begin with the raw amino-acid sequence, 512 residues long: Glutamyl-tRNA(Gln) amidotransferase subunit A (512 aa).

Residues Lys82 and Ser157 each act as charge relay system in the active site. Ser181 acts as the Acyl-ester intermediate in catalysis.

Belongs to the amidase family. GatA subfamily. In terms of assembly, heterotrimer of A, B and C subunits.

It catalyses the reaction L-glutamyl-tRNA(Gln) + L-glutamine + ATP + H2O = L-glutaminyl-tRNA(Gln) + L-glutamate + ADP + phosphate + H(+). Functionally, allows the formation of correctly charged Gln-tRNA(Gln) through the transamidation of misacylated Glu-tRNA(Gln) in organisms which lack glutaminyl-tRNA synthetase. The reaction takes place in the presence of glutamine and ATP through an activated gamma-phospho-Glu-tRNA(Gln). The sequence is that of Glutamyl-tRNA(Gln) amidotransferase subunit A from Bordetella bronchiseptica (strain ATCC BAA-588 / NCTC 13252 / RB50) (Alcaligenes bronchisepticus).